The primary structure comprises 127 residues: Large ribosomal subunit protein uL22 (127 aa).

This sequence belongs to the universal ribosomal protein uL22 family. As to quaternary structure, part of the 50S ribosomal subunit.

In terms of biological role, this protein binds specifically to 23S rRNA; its binding is stimulated by other ribosomal proteins, e.g. L4, L17, and L20. It is important during the early stages of 50S assembly. It makes multiple contacts with different domains of the 23S rRNA in the assembled 50S subunit and ribosome. Its function is as follows. The globular domain of the protein is located near the polypeptide exit tunnel on the outside of the subunit, while an extended beta-hairpin is found that lines the wall of the exit tunnel in the center of the 70S ribosome. This chain is Large ribosomal subunit protein uL22, found in Methylorubrum extorquens (strain CM4 / NCIMB 13688) (Methylobacterium extorquens).